A 79-amino-acid polypeptide reads, in one-letter code: Sec-independent protein translocase protein TatA (79 aa).

Residues 1-21 (MGSLSIWHWIVVIAVVLLLFG) form a helical membrane-spanning segment. Residues 42–60 (GLQDDEKTAEKPDAVKSLD) show a composition bias toward basic and acidic residues. A disordered region spans residues 42 to 79 (GLQDDEKTAEKPDAVKSLDHNATTGTPPNRTDVGSKAV). Over residues 61–70 (HNATTGTPPN) the composition is skewed to polar residues.

The protein belongs to the TatA/E family. The Tat system comprises two distinct complexes: a TatABC complex, containing multiple copies of TatA, TatB and TatC subunits, and a separate TatA complex, containing only TatA subunits. Substrates initially bind to the TatABC complex, which probably triggers association of the separate TatA complex to form the active translocon.

It localises to the cell inner membrane. Functionally, part of the twin-arginine translocation (Tat) system that transports large folded proteins containing a characteristic twin-arginine motif in their signal peptide across membranes. TatA could form the protein-conducting channel of the Tat system. This is Sec-independent protein translocase protein TatA from Rhodopseudomonas palustris (strain HaA2).